We begin with the raw amino-acid sequence, 619 residues long: Genetic interactor of prohibitins 3, mitochondrial (619 aa).

The N-terminal 55 residues, 1–55 (MLKAQIQTGLQLLQRAAVSHMRPSSCTSMLMRMRVHLAPRALQSQRSLSSSEFSP), are a transit peptide targeting the mitochondrion. A CP-type G domain is found at 162–372 (VAAVSDVMHS…IYDVPGFSSA (211 aa)).

Belongs to the TRAFAC class YlqF/YawG GTPase family. GEP3 subfamily.

The protein localises to the mitochondrion. Its function is as follows. May be involved in the mitochondrial lipid metabolism. This chain is Genetic interactor of prohibitins 3, mitochondrial (GEP3), found in Clavispora lusitaniae (strain ATCC 42720) (Yeast).